The primary structure comprises 343 residues: S-adenosylmethionine:tRNA ribosyltransferase-isomerase (343 aa).

It belongs to the QueA family. In terms of assembly, monomer.

It localises to the cytoplasm. The catalysed reaction is 7-aminomethyl-7-carbaguanosine(34) in tRNA + S-adenosyl-L-methionine = epoxyqueuosine(34) in tRNA + adenine + L-methionine + 2 H(+). Its pathway is tRNA modification; tRNA-queuosine biosynthesis. Transfers and isomerizes the ribose moiety from AdoMet to the 7-aminomethyl group of 7-deazaguanine (preQ1-tRNA) to give epoxyqueuosine (oQ-tRNA). The chain is S-adenosylmethionine:tRNA ribosyltransferase-isomerase from Dehalococcoides mccartyi (strain ATCC BAA-2100 / JCM 16839 / KCTC 5957 / BAV1).